The sequence spans 145 residues: 3-hydroxyacyl-[acyl-carrier-protein] dehydratase FabZ (145 aa).

His49 is an active-site residue.

Belongs to the thioester dehydratase family. FabZ subfamily.

It is found in the cytoplasm. It carries out the reaction a (3R)-hydroxyacyl-[ACP] = a (2E)-enoyl-[ACP] + H2O. Involved in unsaturated fatty acids biosynthesis. Catalyzes the dehydration of short chain beta-hydroxyacyl-ACPs and long chain saturated and unsaturated beta-hydroxyacyl-ACPs. The polypeptide is 3-hydroxyacyl-[acyl-carrier-protein] dehydratase FabZ (Rickettsia bellii (strain RML369-C)).